The following is a 111-amino-acid chain: Large ribosomal subunit protein eL31 (111 aa).

Belongs to the eukaryotic ribosomal protein eL31 family.

In Tetrahymena thermophila (strain SB210), this protein is Large ribosomal subunit protein eL31 (RPL31).